The chain runs to 1049 residues: Probable ATP-dependent permease (1049 aa).

The signal sequence occupies residues 1-25; it reads MGSHRRYLYYSILSFLLLSCSVVLA. Topologically, residues 26 to 324 are lumenal; sequence KQDKTPFFEG…KDPTVSWQGK (299 aa). N-linked (GlcNAc...) asparagine glycosylation is found at asparagine 50, asparagine 114, asparagine 165, and asparagine 221. A helical membrane pass occupies residues 325-345; the sequence is LVLALTAVMVLALFTFATFYI. The Cytoplasmic portion of the chain corresponds to 346-463; that stretch reads SKSPLFRNGL…ISMDRKSFSK (118 aa). Residues 384-631 form the ABC transporter domain; that stretch reads LSFENITYSV…LRNEGYICPD (248 aa). 423–430 lines the ATP pocket; that stretch reads GGSGAGKT. The helical transmembrane segment at 464-481 threads the bilayer; sequence IIGFVDQDDFLLPTLTVF. Over 482–793 the chain is Lumenal; the sequence is ETVLNSALLR…SFKNMYRNPK (312 aa). Phosphoserine occurs at positions 659 and 702. In terms of domain architecture, ABC transmembrane type-2 spans 793-1044; the sequence is KLLLGNYLLT…IMGYLALKWI (252 aa). A helical membrane pass occupies residues 794-814; sequence LLLGNYLLTILLSLFLGTLYY. Topologically, residues 815 to 828 are cytoplasmic; that stretch reads NVSNDISGFQNRMG. A helical membrane pass occupies residues 829-849; the sequence is LFFFILTYFGFVTFTGLSSFA. The Lumenal portion of the chain corresponds to 850-877; it reads LERIIFIKERSNNYYSPLAYYISKIMSE. The helical transmembrane segment at 878-898 threads the bilayer; sequence VVPLRVVPPILLSLIVYPMTG. The Cytoplasmic portion of the chain corresponds to 899-909; that stretch reads LNMKDNAFFKC. A helical transmembrane segment spans residues 910-930; that stretch reads IGILILFNLGISLEILTIGII. Residues 931–937 are Lumenal-facing; it reads FEDLNNS. Residue asparagine 935 is glycosylated (N-linked (GlcNAc...) asparagine). A helical transmembrane segment spans residues 938–958; the sequence is IILSVLVLLGSLLFSGLFINT. Topologically, residues 959–1000 are cytoplasmic; it reads KNITNVAFKYLKNFSVFYYAYESLLINEVKTLMLKERKYGLN. A helical transmembrane segment spans residues 1001–1021; the sequence is IEVPGATILSTFGFVVQNLVF. Topologically, residues 1022-1024 are lumenal; it reads DIK. A helical membrane pass occupies residues 1025 to 1045; it reads ILALFNVVFLIMGYLALKWIV. The Cytoplasmic segment spans residues 1046 to 1049; that stretch reads VEQK.

This sequence belongs to the ABC transporter superfamily. ABCG family. Eye pigment precursor importer (TC 3.A.1.204) subfamily.

It is found in the endoplasmic reticulum membrane. The chain is Probable ATP-dependent permease (ADP1) from Saccharomyces cerevisiae (strain ATCC 204508 / S288c) (Baker's yeast).